A 182-amino-acid polypeptide reads, in one-letter code: Early nodulin-like protein 10 (182 aa).

The first 20 residues, 1–20 (MSSVMMCCCLLLLFGLLSEG), serve as a signal peptide directing secretion. The Phytocyanin domain occupies 21–125 (REILVGGKSN…GEKLRVVVLS (105 aa)). An N-linked (GlcNAc...) asparagine glycan is attached at Asn-65. A disulfide bond links Cys-79 and Cys-113. N-linked (GlcNAc...) asparagine glycosylation is found at Asn-129 and Asn-148. Asn-157 carries GPI-anchor amidated asparagine lipidation. The propeptide at 158 to 182 (AHIMNKGSLNTAWSLLLLLPLGLLV) is removed in mature form.

Belongs to the early nodulin-like (ENODL) family. In terms of tissue distribution, mostly expressed in flowers, and, to a lower extent, in leaves, but barely in seedlings, stems, seeds and roots.

The protein resides in the cell membrane. Its function is as follows. May act as a carbohydrate transporter. The protein is Early nodulin-like protein 10 of Arabidopsis thaliana (Mouse-ear cress).